An 80-amino-acid chain; its full sequence is Cell division topological specificity factor (80 aa).

This sequence belongs to the MinE family.

Its function is as follows. Prevents the cell division inhibition by proteins MinC and MinD at internal division sites while permitting inhibition at polar sites. This ensures cell division at the proper site by restricting the formation of a division septum at the midpoint of the long axis of the cell. In Wolinella succinogenes (strain ATCC 29543 / DSM 1740 / CCUG 13145 / JCM 31913 / LMG 7466 / NCTC 11488 / FDC 602W) (Vibrio succinogenes), this protein is Cell division topological specificity factor.